The sequence spans 77 residues: Conotoxin Vc1 (77 aa).

Residues Met1–Ala22 form the signal peptide. Propeptides lie at residues His23–Arg58 and Arg73–Tyr77.

The protein belongs to the conotoxin H superfamily. In terms of tissue distribution, expressed by the venom duct.

It localises to the secreted. Probable toxin. This Conus victoriae (Queen Victoria cone) protein is Conotoxin Vc1.